The primary structure comprises 815 residues: Lon protease 2 (815 aa).

A Lon N-terminal domain is found at 19 to 212 (LPVLPLINTV…RLSVVLSQEI (194 aa)). An ATP-binding site is contributed by 365 to 372 (GPPGVGKT). The Lon proteolytic domain occupies 601 to 782 (RDEIGVATGM…DEVLPIAFVS (182 aa)). Catalysis depends on residues S688 and K731.

The protein belongs to the peptidase S16 family. Homohexamer. Organized in a ring with a central cavity.

The protein resides in the cytoplasm. It carries out the reaction Hydrolysis of proteins in presence of ATP.. In terms of biological role, ATP-dependent serine protease that mediates the selective degradation of mutant and abnormal proteins as well as certain short-lived regulatory proteins. Required for cellular homeostasis and for survival from DNA damage and developmental changes induced by stress. Degrades polypeptides processively to yield small peptide fragments that are 5 to 10 amino acids long. Binds to DNA in a double-stranded, site-specific manner. This Herpetosiphon aurantiacus (strain ATCC 23779 / DSM 785 / 114-95) protein is Lon protease 2.